Reading from the N-terminus, the 894-residue chain is Protein translocase subunit SecA (894 aa).

ATP contacts are provided by residues Gln-87, 105-109 (GEGKT), and Asp-512. The disordered stretch occupies residues 857–894 (FNLGDEPEAQQPVTSKKVGRNEPCPCGSGKKYKQCCGK). Zn(2+) is bound by residues Cys-880, Cys-882, Cys-891, and Cys-892.

The protein belongs to the SecA family. Monomer and homodimer. Part of the essential Sec protein translocation apparatus which comprises SecA, SecYEG and auxiliary proteins SecDF-YajC and YidC. The cofactor is Zn(2+).

Its subcellular location is the cell inner membrane. It is found in the cytoplasm. It carries out the reaction ATP + H2O + cellular proteinSide 1 = ADP + phosphate + cellular proteinSide 2.. Functionally, part of the Sec protein translocase complex. Interacts with the SecYEG preprotein conducting channel. Has a central role in coupling the hydrolysis of ATP to the transfer of proteins into and across the cell membrane, serving as an ATP-driven molecular motor driving the stepwise translocation of polypeptide chains across the membrane. In Geotalea uraniireducens (strain Rf4) (Geobacter uraniireducens), this protein is Protein translocase subunit SecA.